Reading from the N-terminus, the 283-residue chain is Phospholipase C (283 aa).

An N-terminal signal peptide occupies residues 1–24 (MKKKVLALGAAITLVAPLQSVAFA). Residues 25–38 (HENDGGQRFGVIPR) constitute a propeptide that is removed on maturation. Zn(2+) is bound by residues W39, H52, D93, H107, H156, D160, H166, H180, and E184. In terms of domain architecture, Zn-dependent PLC spans 39-283 (WSAEDKHKEG…QLWFDTYGNR (245 aa)).

It belongs to the bacterial zinc-metallophospholipase C family. In terms of assembly, monomer. It depends on Zn(2+) as a cofactor.

It catalyses the reaction a 1,2-diacyl-sn-glycero-3-phosphocholine + H2O = phosphocholine + a 1,2-diacyl-sn-glycerol + H(+). Required, with sphingomyelinase, to effect target cell lysis (hemolysis). This is Phospholipase C (cerA) from Bacillus cereus.